The chain runs to 433 residues: Glutamate-1-semialdehyde 2,1-aminomutase (433 aa).

At lysine 271 the chain carries N6-(pyridoxal phosphate)lysine.

It belongs to the class-III pyridoxal-phosphate-dependent aminotransferase family. HemL subfamily. In terms of assembly, homodimer. Requires pyridoxal 5'-phosphate as cofactor.

The protein resides in the cytoplasm. The enzyme catalyses (S)-4-amino-5-oxopentanoate = 5-aminolevulinate. It functions in the pathway porphyrin-containing compound metabolism; protoporphyrin-IX biosynthesis; 5-aminolevulinate from L-glutamyl-tRNA(Glu): step 2/2. The protein operates within porphyrin-containing compound metabolism; chlorophyll biosynthesis. The sequence is that of Glutamate-1-semialdehyde 2,1-aminomutase from Prochlorococcus marinus (strain MIT 9301).